We begin with the raw amino-acid sequence, 206 residues long: MPTPTKGARLGGSPAHERLLLANLATALFEHGGITTTEAKAKRLRPYAERLVTFAKRGDLHARRRVMRQVRDNSVVHTLFTEIGPRYANRNGGYTRIVKIGNRKGDNAPLARIELVEALTVGQQAVSEAERARGTRFEARRKPTGATVEAAEELAQESPTAAAVAVEAAEPAETPAEGAAGKPTTAQTDDSGIGDDSGAGEQNSAN.

Residues 130 to 141 (ERARGTRFEARR) are compositionally biased toward basic and acidic residues. The tract at residues 130–206 (ERARGTRFEA…SGAGEQNSAN (77 aa)) is disordered. 2 stretches are compositionally biased toward low complexity: residues 160–181 (TAAAVAVEAAEPAETPAEGAAG) and 189–200 (DDSGIGDDSGAG).

Belongs to the bacterial ribosomal protein bL17 family. Part of the 50S ribosomal subunit. Contacts protein L32.

This is Large ribosomal subunit protein bL17 from Frankia casuarinae (strain DSM 45818 / CECT 9043 / HFP020203 / CcI3).